Here is a 428-residue protein sequence, read N- to C-terminus: MVLLHPLLTAAALLGASARAQSVVGTPFGFASGTTGGGNAAPAAPKDTNELKEWLADPNPRVIVIDKEFNFIGTEDTCTDCECCIPDSNTCGDAGQNAIKTEGSDWCGSYPATTCTYDNAGLEGMEVASDKTIIGVGDAGVIRGKGLRLVNGVSNIIIQNVHITELNPQYIWGGDAISLDGTDKIWVDHVKVSLVGRQMFVTGYESSGGVTVSNSEFDGQTKWSASCDGHHYWSVLGYGKGDQITFANNYIHHTSGRSPKIEFDSHWHAYNNFWENNSGHAFDVGEGANVLIEGNVFSNVKTPMNPEDTPGSTFAVNAQDASSCTSALGRPCIANELTSSGELSGNDEAVLSGWPKGEGDTKAMTTDKVPSYVKANAGVGKLGSGGSGAASSSASITPSPTSSAIPSSSATPSSSAYARRHYARHHHY.

A signal peptide spans 1–20 (MVLLHPLLTAAALLGASARA). The cysteines at positions 83 and 107 are disulfide-linked. The active site involves arginine 257. Asparagine 276 is a glycosylation site (N-linked (GlcNAc...) asparagine). Cysteine 324 and cysteine 332 are oxidised to a cystine. Disordered regions lie at residues 337–367 (LTSSGELSGNDEAVLSGWPKGEGDTKAMTTD) and 383–428 (GSGG…HHHY). Residues 389 to 417 (AASSSASITPSPTSSAIPSSSATPSSSAY) are compositionally biased toward low complexity. Positions 418–428 (ARRHYARHHHY) are enriched in basic residues.

Belongs to the polysaccharide lyase 1 family.

The protein localises to the secreted. It catalyses the reaction Eliminative cleavage of (1-&gt;4)-alpha-D-galacturonan methyl ester to give oligosaccharides with 4-deoxy-6-O-methyl-alpha-D-galact-4-enuronosyl groups at their non-reducing ends.. Functionally, pectinolytic enzymes consist of four classes of enzymes: pectin lyase, polygalacturonase, pectin methylesterase and rhamnogalacturonase. Among pectinolytic enzymes, pectin lyase is the most important in depolymerization of pectin, since it cleaves internal glycosidic bonds of highly methylated pectins. This Aspergillus flavus (strain ATCC 200026 / FGSC A1120 / IAM 13836 / NRRL 3357 / JCM 12722 / SRRC 167) protein is Probable pectin lyase F (pelF).